The primary structure comprises 367 residues: WAT1-related protein At3g28050 (367 aa).

Transmembrane regions (helical) follow at residues Val10–Phe30, Phe40–Phe60, Phe73–Gly93, Thr103–Phe123, Thr142–Ala162, Trp179–Val199, Phe211–Phe231, Ile246–His266, Leu276–Phe296, and Leu301–Trp321. 2 consecutive EamA domains span residues Gly25 to Thr153 and Leu195 to Val319. Positions His338–Val367 are disordered.

It belongs to the drug/metabolite transporter (DMT) superfamily. Plant drug/metabolite exporter (P-DME) (TC 2.A.7.4) family.

Its subcellular location is the membrane. This chain is WAT1-related protein At3g28050, found in Arabidopsis thaliana (Mouse-ear cress).